Reading from the N-terminus, the 77-residue chain is Probable Fe(2+)-trafficking protein (77 aa).

The protein belongs to the Fe(2+)-trafficking protein family. In terms of assembly, monomer.

Could be a mediator in iron transactions between iron acquisition and iron-requiring processes, such as synthesis and/or repair of Fe-S clusters in biosynthetic enzymes. This is Probable Fe(2+)-trafficking protein from Buchnera aphidicola subsp. Acyrthosiphon pisum (strain APS) (Acyrthosiphon pisum symbiotic bacterium).